Here is a 344-residue protein sequence, read N- to C-terminus: uncharacterized protein (344 aa).

8 helical membrane passes run 25–45 (GAGW…VGAV), 68–88 (FVDA…ADGV), 104–124 (GVVP…GWNC), 133–153 (SACA…GVGA), 161–181 (GVGT…LAVV), 224–244 (LGAF…DAAL), 276–296 (VFAL…PAAL), and 302–322 (LVTA…LAGV).

Belongs to the peptidase S58 family.

It localises to the cell membrane. Its function is as follows. Aminopeptidase. This is an uncharacterized protein from Mycobacterium bovis (strain ATCC BAA-935 / AF2122/97).